The following is a 1072-amino-acid chain: Carbamoyl phosphate synthase large chain (1072 aa).

The segment at 1–401 is carboxyphosphate synthetic domain; that stretch reads MPKRLDINTI…SLLKAVRSLE (401 aa). The ATP site is built by R129, R169, G175, G176, K208, I210, E215, G241, V242, H243, Q284, and E298. One can recognise an ATP-grasp 1 domain in the interval 133–327; sequence RTLMQDLNEP…IAKLAAKIAV (195 aa). The Mg(2+) site is built by Q284, E298, and N300. The Mn(2+) site is built by Q284, E298, and N300. Residues 402–546 form an oligomerization domain region; it reads LGIYHLELDH…YSTYADENES (145 aa). Residues 547–929 are carbamoyl phosphate synthetic domain; sequence IVTDRKSVVV…ALYKGLVASG (383 aa). The ATP-grasp 2 domain maps to 671–861; that stretch reads EAALTKLGIP…MANVATKVIL (191 aa). ATP contacts are provided by R707, R746, E752, G777, V778, H779, S780, Q820, and E832. Mg(2+) is bound by residues Q820, E832, and N834. Residues Q820, E832, and N834 each contribute to the Mn(2+) site. In terms of domain architecture, MGS-like spans 930–1072; that stretch reads INIPTHGSVI…QTKRHEVVHA (143 aa). Residues 930–1072 are allosteric domain; the sequence is INIPTHGSVI…QTKRHEVVHA (143 aa).

It belongs to the CarB family. As to quaternary structure, composed of two chains; the small (or glutamine) chain promotes the hydrolysis of glutamine to ammonia, which is used by the large (or ammonia) chain to synthesize carbamoyl phosphate. Tetramer of heterodimers (alpha,beta)4. It depends on Mg(2+) as a cofactor. The cofactor is Mn(2+).

It carries out the reaction hydrogencarbonate + L-glutamine + 2 ATP + H2O = carbamoyl phosphate + L-glutamate + 2 ADP + phosphate + 2 H(+). It catalyses the reaction hydrogencarbonate + NH4(+) + 2 ATP = carbamoyl phosphate + 2 ADP + phosphate + 2 H(+). The protein operates within amino-acid biosynthesis; L-arginine biosynthesis; carbamoyl phosphate from bicarbonate: step 1/1. Its pathway is pyrimidine metabolism; UMP biosynthesis via de novo pathway; (S)-dihydroorotate from bicarbonate: step 1/3. Its function is as follows. Large subunit of the glutamine-dependent carbamoyl phosphate synthetase (CPSase). CPSase catalyzes the formation of carbamoyl phosphate from the ammonia moiety of glutamine, carbonate, and phosphate donated by ATP, constituting the first step of 2 biosynthetic pathways, one leading to arginine and/or urea and the other to pyrimidine nucleotides. The large subunit (synthetase) binds the substrates ammonia (free or transferred from glutamine from the small subunit), hydrogencarbonate and ATP and carries out an ATP-coupled ligase reaction, activating hydrogencarbonate by forming carboxy phosphate which reacts with ammonia to form carbamoyl phosphate. The protein is Carbamoyl phosphate synthase large chain of Bacillus cereus (strain AH187).